Here is a 67-residue protein sequence, read N- to C-terminus: Major cold shock protein (67 aa).

Residues 4–64 enclose the CSD domain; it reads GTVKWFNAEK…GPKGLQAANV (61 aa).

The protein resides in the cytoplasm. The chain is Major cold shock protein (cspA) from Micrococcus luteus (strain ATCC 4698 / DSM 20030 / JCM 1464 / CCM 169 / CCUG 5858 / IAM 1056 / NBRC 3333 / NCIMB 9278 / NCTC 2665 / VKM Ac-2230) (Micrococcus lysodeikticus).